Here is a 169-residue protein sequence, read N- to C-terminus: Der GTPase-activating protein YihI (169 aa).

Disordered stretches follow at residues 1–75 and 144–169; these read MKPS…IPLG and GLSYDDDEEEEEDEKQEDMMRLLRGN. The segment covering 10–19 has biased composition (basic residues); it reads SKGHAKARRK. A compositionally biased stretch (basic and acidic residues) spans 20–30; the sequence is TREELDQEARD. Residues 31 to 40 show a composition bias toward basic residues; it reads RKRQKKRRGH. Residues 49–58 show a composition bias toward polar residues; it reads GNTTSGSKGQ. Acidic residues predominate over residues 147–159; sequence YDDDEEEEEDEKQ. The span at 160-169 shows a compositional bias: basic and acidic residues; the sequence is EDMMRLLRGN.

It belongs to the YihI family. As to quaternary structure, interacts with Der.

Functionally, a GTPase-activating protein (GAP) that modifies Der/EngA GTPase function. May play a role in ribosome biogenesis. The polypeptide is Der GTPase-activating protein YihI (Escherichia coli (strain 55989 / EAEC)).